Here is a 199-residue protein sequence, read N- to C-terminus: MNIEKTLSVQKREGYGKGPSGRLRAQKLIPGVFYTPKGENISVQAPALPLQKIYEEMGHTTVFNLEIEENGQKTAYPVLIWQVQFHPYKRAFTHIDFYGVDLDKEVTVDVPVEFVGTSRGVKLGGVLETYREMVRLTSKPLNMPQKITVDVTDMGINDTISVGDLKLPENVRAEFDQNYALVTVISKSKDDAEEEGDED.

Residues 1 to 21 (MNIEKTLSVQKREGYGKGPSG) form a disordered region.

This sequence belongs to the bacterial ribosomal protein bL25 family. CTC subfamily. In terms of assembly, part of the 50S ribosomal subunit; part of the 5S rRNA/L5/L18/L25 subcomplex. Contacts the 5S rRNA. Binds to the 5S rRNA independently of L5 and L18.

Functionally, this is one of the proteins that binds to the 5S RNA in the ribosome where it forms part of the central protuberance. This Desulfovibrio desulfuricans (strain ATCC 27774 / DSM 6949 / MB) protein is Large ribosomal subunit protein bL25.